The following is a 355-amino-acid chain: Putative GPI-anchor transamidase (355 aa).

The signal sequence occupies residues Met1–Ala24. Catalysis depends on residues His165 and Cys207.

Belongs to the peptidase C13 family.

Its pathway is glycolipid biosynthesis; glycosylphosphatidylinositol-anchor biosynthesis. Mediates GPI anchoring in the endoplasmic reticulum, by replacing a protein's C-terminal GPI attachment signal peptide with a pre-assembled GPI. During this transamidation reaction, the GPI transamidase forms a carbonyl intermediate with the substrate protein. This chain is Putative GPI-anchor transamidase, found in Drosophila melanogaster (Fruit fly).